Reading from the N-terminus, the 250-residue chain is Probable transcriptional regulatory protein Cvib_1432 (250 aa).

This sequence belongs to the TACO1 family.

The protein resides in the cytoplasm. This chain is Probable transcriptional regulatory protein Cvib_1432, found in Chlorobium phaeovibrioides (strain DSM 265 / 1930) (Prosthecochloris vibrioformis (strain DSM 265)).